The following is a 109-amino-acid chain: Peptide chaperone MftB (109 aa).

Belongs to the peptide chaperone MftB family.

Functionally, peptide chaperone involved in the biosynthesis of the enzyme cofactor mycofactocin (MFT). Binds MftA and MftC with high affinity, and is essential for MftC activity on MftA, likely via the formation of a ternary complex. This chain is Peptide chaperone MftB, found in Mycobacterium tuberculosis (strain ATCC 25618 / H37Rv).